The primary structure comprises 445 residues: ATP-dependent protease ATPase subunit HslU (445 aa).

ATP contacts are provided by residues Ile17, 59–64 (GVGKTE), Asp254, Glu319, and Arg391.

Belongs to the ClpX chaperone family. HslU subfamily. As to quaternary structure, a double ring-shaped homohexamer of HslV is capped on each side by a ring-shaped HslU homohexamer. The assembly of the HslU/HslV complex is dependent on binding of ATP.

Its subcellular location is the cytoplasm. Functionally, ATPase subunit of a proteasome-like degradation complex; this subunit has chaperone activity. The binding of ATP and its subsequent hydrolysis by HslU are essential for unfolding of protein substrates subsequently hydrolyzed by HslV. HslU recognizes the N-terminal part of its protein substrates and unfolds these before they are guided to HslV for hydrolysis. This chain is ATP-dependent protease ATPase subunit HslU, found in Pseudomonas fluorescens (strain SBW25).